A 78-amino-acid polypeptide reads, in one-letter code: Large ribosomal subunit protein eL20 (78 aa).

The protein belongs to the eukaryotic ribosomal protein eL20 family. In terms of assembly, part of the 50S ribosomal subunit. Binds 23S rRNA.

The sequence is that of Large ribosomal subunit protein eL20 from Pyrobaculum arsenaticum (strain DSM 13514 / JCM 11321 / PZ6).